We begin with the raw amino-acid sequence, 78 residues long: Large ribosomal subunit protein bL28 (78 aa).

Belongs to the bacterial ribosomal protein bL28 family.

This Thioalkalivibrio sulfidiphilus (strain HL-EbGR7) protein is Large ribosomal subunit protein bL28.